Here is a 233-residue protein sequence, read N- to C-terminus: MSTESMIQDVELAEEALPRKTAGPQGSRRCWFLSLFSFLLVAGAATLFCLLHFGVIGPQREEFPKDPSLISPLAQAVRSSSRTPSDKPVAHVVANPQAEGQLQWLNRRANALVANGVELTDNQLVVPSEGLYLIYSQVLFKGQGCPSNHVLLTHTISRIAVSYQTKVNLLSAIKSPCQRETPEGAEAKPWYEPIYLGGVFQLEKGDRLSAEINLPDYLDFAESGQVYFGIIAL.

Topologically, residues 1 to 35 (MSTESMIQDVELAEEALPRKTAGPQGSRRCWFLSL) are cytoplasmic. Residue serine 2 is modified to Phosphoserine; by CK1. Lysine 20 carries N6-myristoyl lysine lipidation. A helical; Signal-anchor for type II membrane protein membrane pass occupies residues 36–56 (FSFLLVAGAATLFCLLHFGVI). The Extracellular portion of the chain corresponds to 57-233 (GPQREEFPKD…GQVYFGIIAL (177 aa)). O-linked (GalNAc...) serine; in soluble form glycosylation is present at serine 80. Residues 88–233 (PVAHVVANPQ…GQVYFGIIAL (146 aa)) enclose the THD domain. Cysteine 145 and cysteine 177 form a disulfide bridge.

Belongs to the tumor necrosis factor family. As to quaternary structure, homotrimer. Interacts with SPPL2B. Post-translationally, the soluble form derives from the membrane form by proteolytic processing. The membrane-bound form is further proteolytically processed by SPPL2A or SPPL2B through regulated intramembrane proteolysis producing TNF intracellular domains (ICD1 and ICD2) released in the cytosol and TNF C-domain 1 and C-domain 2 secreted into the extracellular space. The membrane form, but not the soluble form, is phosphorylated on serine residues. Dephosphorylation of the membrane form occurs by binding to soluble TNFRSF1A/TNFR1. In terms of processing, O-glycosylated; glycans contain galactose, N-acetylgalactosamine and N-acetylneuraminic acid. Post-translationally, the soluble form is demyristoylated by SIRT6, promoting its secretion.

It is found in the cell membrane. The protein resides in the membrane. It localises to the secreted. Cytokine that binds to TNFRSF1A/TNFR1 and TNFRSF1B/TNFBR. It is mainly secreted by macrophages and can induce cell death of certain tumor cell lines. It is potent pyrogen causing fever by direct action or by stimulation of interleukin-1 secretion and is implicated in the induction of cachexia, Under certain conditions it can stimulate cell proliferation and induce cell differentiation. Induces insulin resistance in adipocytes via inhibition of insulin-induced IRS1 tyrosine phosphorylation and insulin-induced glucose uptake. Induces GKAP42 protein degradation in adipocytes which is partially responsible for TNF-induced insulin resistance. Plays a role in angiogenesis by inducing VEGF production synergistically with IL1B and IL6. Promotes osteoclastogenesis and therefore mediates bone resorption. In terms of biological role, the TNF intracellular domain (ICD) form induces IL12 production in dendritic cells. The polypeptide is Tumor necrosis factor (TNF) (Macaca fascicularis (Crab-eating macaque)).